The following is a 341-amino-acid chain: Glycerol-3-phosphate dehydrogenase [NAD(P)+] (341 aa).

4 residues coordinate NADPH: serine 12, tryptophan 13, arginine 33, and lysine 107. Residues lysine 107, glycine 134, and threonine 136 each contribute to the sn-glycerol 3-phosphate site. Alanine 138 contributes to the NADPH binding site. Positions 189, 242, 252, 253, and 254 each coordinate sn-glycerol 3-phosphate. Lysine 189 serves as the catalytic Proton acceptor. Residue arginine 253 participates in NADPH binding. Residues valine 277 and glutamate 279 each contribute to the NADPH site.

It belongs to the NAD-dependent glycerol-3-phosphate dehydrogenase family.

The protein localises to the cytoplasm. The catalysed reaction is sn-glycerol 3-phosphate + NAD(+) = dihydroxyacetone phosphate + NADH + H(+). It carries out the reaction sn-glycerol 3-phosphate + NADP(+) = dihydroxyacetone phosphate + NADPH + H(+). Its pathway is membrane lipid metabolism; glycerophospholipid metabolism. In terms of biological role, catalyzes the reduction of the glycolytic intermediate dihydroxyacetone phosphate (DHAP) to sn-glycerol 3-phosphate (G3P), the key precursor for phospholipid synthesis. In Halothermothrix orenii (strain H 168 / OCM 544 / DSM 9562), this protein is Glycerol-3-phosphate dehydrogenase [NAD(P)+].